Reading from the N-terminus, the 309-residue chain is Transcription termination/antitermination protein NusG (309 aa).

2 disordered regions span residues 1-24 (MSDP…ADDE) and 58-91 (EGDH…VEAG). The span at 65–91 (TDEDIEAGAVETDEDVETDTDEDVEAG) shows a compositional bias: acidic residues.

It belongs to the NusG family.

Its function is as follows. Participates in transcription elongation, termination and antitermination. The sequence is that of Transcription termination/antitermination protein NusG from Streptomyces galbus.